A 179-amino-acid polypeptide reads, in one-letter code: MYEYLDRRYALALYEVAEEKNKVEEYLNDLREICDIIYGNNELYEIIKHPQISTVRKKKTFRNIFEGKIDDELLSFLMVLIEKDRILYLREKLKEMEKIHLERNNTLLAEVKSVVPLTEDEVTRLVAKLENKYSKKILLKQEIDKSIIGGLYVRVGDDVIDGTVKSRLDDMKQIMLKRE.

This sequence belongs to the ATPase delta chain family. In terms of assembly, F-type ATPases have 2 components, F(1) - the catalytic core - and F(0) - the membrane proton channel. F(1) has five subunits: alpha(3), beta(3), gamma(1), delta(1), epsilon(1). F(0) has three main subunits: a(1), b(2) and c(10-14). The alpha and beta chains form an alternating ring which encloses part of the gamma chain. F(1) is attached to F(0) by a central stalk formed by the gamma and epsilon chains, while a peripheral stalk is formed by the delta and b chains.

The protein localises to the cell membrane. F(1)F(0) ATP synthase produces ATP from ADP in the presence of a proton or sodium gradient. F-type ATPases consist of two structural domains, F(1) containing the extramembraneous catalytic core and F(0) containing the membrane proton channel, linked together by a central stalk and a peripheral stalk. During catalysis, ATP synthesis in the catalytic domain of F(1) is coupled via a rotary mechanism of the central stalk subunits to proton translocation. Its function is as follows. This protein is part of the stalk that links CF(0) to CF(1). It either transmits conformational changes from CF(0) to CF(1) or is implicated in proton conduction. This is ATP synthase subunit delta from Clostridium perfringens (strain ATCC 13124 / DSM 756 / JCM 1290 / NCIMB 6125 / NCTC 8237 / Type A).